The following is a 431-amino-acid chain: Enolase (431 aa).

(2R)-2-phosphoglycerate is bound at residue glutamine 167. The Proton donor role is filled by glutamate 209. Mg(2+)-binding residues include aspartate 246, glutamate 287, and aspartate 314. Positions 339, 368, 369, and 390 each coordinate (2R)-2-phosphoglycerate. The Proton acceptor role is filled by lysine 339.

This sequence belongs to the enolase family. It depends on Mg(2+) as a cofactor.

The protein localises to the cytoplasm. Its subcellular location is the secreted. It is found in the cell surface. It carries out the reaction (2R)-2-phosphoglycerate = phosphoenolpyruvate + H2O. Its pathway is carbohydrate degradation; glycolysis; pyruvate from D-glyceraldehyde 3-phosphate: step 4/5. Catalyzes the reversible conversion of 2-phosphoglycerate (2-PG) into phosphoenolpyruvate (PEP). It is essential for the degradation of carbohydrates via glycolysis. The polypeptide is Enolase (Prochlorococcus marinus (strain MIT 9303)).